The sequence spans 270 residues: Cross-pathway control protein 1 (270 aa).

Disordered stretches follow at residues 114–135 (QAQAQVQTQPQTQTQTEQQTQP) and 153–213 (QTVH…IIVE). Low complexity predominate over residues 184-195 (SVSPPSGRHSSV). A bZIP domain is found at 216 to 270 (SDVVAMKRARNTLAARKSRERKAQRLEELEAKIEELIAERDRWKNLALAHGASTE). Residues 222 to 240 (KRARNTLAARKSRERKAQR) form a basic motif region. The leucine-zipper stretch occupies residues 241-248 (LEELEAKI).

It belongs to the bZIP family. GCN4 subfamily. Binds DNA as a dimer.

The protein localises to the nucleus. In terms of biological role, in N.crassa grown under amino acid starvation conditions, this protein is required for increasing the transcription of the genes coding for many amino acid biosynthetic pathways enzymes. This transcription factor binds and recognize the DNA sequence: 5'-TGACTC-3'. The polypeptide is Cross-pathway control protein 1 (cpc-1) (Neurospora crassa (strain ATCC 24698 / 74-OR23-1A / CBS 708.71 / DSM 1257 / FGSC 987)).